Consider the following 593-residue polypeptide: MATPHLYHRYNSKSSNKNINSSGNSTEVDRFIPKSVSRNAYKSIPMLNGFDISYSELCEKSPSPERLSSPEFFNELRNTGHYESISTTNEFSMSSISSSSESQVTRSGSARASRNDYSKLTKEQKDHRKNIAHSLGFQLPDRVFTFETTSAEILEKNKAIKNCFGPGSCAEIRSTFDFSTLSPDVARYYIANSNARSASPQRQIQRPAKRVKSHIPYRVLDAPCLRNDFYSNLISWSRTTNNVLVGLGCSVYIWSEKEGAVSILDHQYLSEKRDLVTCVSFCPYNTYFIVGTKFGRILLYDQKEFFHSSNTNEKEPVFVFQTESFKGICCLEWFKPGEICKFYVGEENGNVSLFEIKSLHFPIKNWSKRQKLEDENLIGLKLHSTYQAQAQQVCGISLNEHANLLAVGGNDNSCSLWDISDLDKPIKKFVLPHKAAVKAIAFCPWSKSLLATGGGSKDRCIKFWHTSTGTLLDEICTSGQVTSLIWSLRHKQIVATFGFGDTKNPVLITLYSYPKLSKLLEVRSPNPLRVLSAVISPSSMAICVATNDETIRFYELWNDKEEIINEIQESGIYGSNIIEYMEGIETTHNKRIR.

Residues 1 to 11 show a composition bias toward basic residues; sequence MATPHLYHRYN. Positions 1 to 26 are disordered; it reads MATPHLYHRYNSKSSNKNINSSGNST. Over residues 12-25 the composition is skewed to low complexity; the sequence is SKSSNKNINSSGNS. The C-box signature appears at 29–35; the sequence is DRFIPKS. Residues 94 to 109 are compositionally biased toward low complexity; that stretch reads SSISSSSESQVTRSGS. Residues 94 to 125 are disordered; sequence SSISSSSESQVTRSGSARASRNDYSKLTKEQK. The segment covering 113–125 has biased composition (basic and acidic residues); it reads SRNDYSKLTKEQK. WD repeat units follow at residues 226–264, 271–310, 323–364, 388–427, 432–474, and 525–564; these read RNDF…VSIL, EKRD…HSSN, ESFK…FPIK, AQAQ…KPIK, PHKA…LLDE, and PNPL…EEII.

This sequence belongs to the WD repeat CDC20/Fizzy family. Interacts with CDC16.

Functionally, activator protein that regulates the ubiquitin ligase activity and substrate specificity of the anaphase promoting complex/cyclosome (APC/C). Required for the ubiquitination and subsequent degradation of the B-type cyclin CLB1 by the APC/C complex during meiosis. Required for meiosis I, late meiotic gene expression and spore wall assembly. In Saccharomyces cerevisiae (strain ATCC 204508 / S288c) (Baker's yeast), this protein is Meiosis-specific APC/C activator protein AMA1 (AMA1).